A 421-amino-acid polypeptide reads, in one-letter code: Putative bifunctional polynucleotide phosphatase/kinase (421 aa).

The segment at 25–231 (DSYLKGIINN…SENLKTNYKL (207 aa)) is phosphatase. The segment at 235-415 (NPTEIIDEIE…DDPKWKRSFM (181 aa)) is kinase. 265–272 (GQPGSGKS) contacts ATP.

The protein in the N-terminal section; belongs to the DNA 3' phosphatase family.

The enzyme catalyses a 3'end (2'-deoxyribonucleotide 3'-phosphate)-DNA + H2O = a 3'-end 2'-deoxyribonucleotide-DNA + phosphate. The catalysed reaction is a 5'-end dephospho-2'-deoxyribonucleoside-DNA + ATP = a 5'-end 5'-phospho-2'-deoxyribonucleoside-DNA + ADP + H(+). The protein is Putative bifunctional polynucleotide phosphatase/kinase of Acanthamoeba polyphaga mimivirus (APMV).